The primary structure comprises 357 residues: Phospho-N-acetylmuramoyl-pentapeptide-transferase (357 aa).

A run of 10 helical transmembrane segments spans residues 23-43 (AIFS…YFIY), 70-90 (TMGG…YCNL), 91-111 (SNIY…IGFI), 127-147 (LKWK…MIKI), 171-191 (YLYI…VNLT), 196-216 (GLAI…SLFS), 236-256 (LAIL…FNSY), 260-280 (VFMG…IAIL), 286-306 (LLII…LQII), and 334-354 (LIIV…LISL).

This sequence belongs to the glycosyltransferase 4 family. MraY subfamily. Mg(2+) is required as a cofactor.

The protein resides in the cell inner membrane. The catalysed reaction is UDP-N-acetyl-alpha-D-muramoyl-L-alanyl-gamma-D-glutamyl-meso-2,6-diaminopimeloyl-D-alanyl-D-alanine + di-trans,octa-cis-undecaprenyl phosphate = di-trans,octa-cis-undecaprenyl diphospho-N-acetyl-alpha-D-muramoyl-L-alanyl-D-glutamyl-meso-2,6-diaminopimeloyl-D-alanyl-D-alanine + UMP. Its pathway is cell wall biogenesis; peptidoglycan biosynthesis. Functionally, catalyzes the initial step of the lipid cycle reactions in the biosynthesis of the cell wall peptidoglycan: transfers peptidoglycan precursor phospho-MurNAc-pentapeptide from UDP-MurNAc-pentapeptide onto the lipid carrier undecaprenyl phosphate, yielding undecaprenyl-pyrophosphoryl-MurNAc-pentapeptide, known as lipid I. This chain is Phospho-N-acetylmuramoyl-pentapeptide-transferase, found in Buchnera aphidicola subsp. Acyrthosiphon pisum (strain APS) (Acyrthosiphon pisum symbiotic bacterium).